The chain runs to 490 residues: Tandem C2 domains nuclear protein (490 aa).

Phosphoserine is present on residues serine 83, serine 156, serine 168, serine 174, and serine 211. A disordered region spans residues 189–215 (HDSLSSVPSSSSSRKNSQGSNRSLDTI). The span at 192–211 (LSSVPSSSSSRKNSQGSNRS) shows a compositional bias: low complexity. Phosphothreonine occurs at positions 214 and 216. At serine 218 the chain carries Phosphoserine. 2 consecutive C2 domains span residues 223–342 (DFGR…SLDI) and 344–471 (PPSK…NQWK). The Nuclear localization signal signature appears at 447-449 (RRK).

It is found in the nucleus. This is Tandem C2 domains nuclear protein (TC2N) from Homo sapiens (Human).